The primary structure comprises 612 residues: Probable Xaa-Pro aminopeptidase P (612 aa).

4 residues coordinate Mn(2+): D409, D420, E518, and E532.

Belongs to the peptidase M24B family. Mn(2+) serves as cofactor.

It catalyses the reaction Release of any N-terminal amino acid, including proline, that is linked to proline, even from a dipeptide or tripeptide.. In terms of biological role, catalyzes the removal of a penultimate prolyl residue from the N-termini of peptides. The protein is Probable Xaa-Pro aminopeptidase P (AMPP) of Verticillium alfalfae (strain VaMs.102 / ATCC MYA-4576 / FGSC 10136) (Verticillium wilt of alfalfa).